Consider the following 413-residue polypeptide: Serine/threonine transporter SstT (413 aa).

Helical transmembrane passes span 22 to 42 (GLLL…VLGF), 61 to 81 (AVAP…KQLG), 89 to 109 (IVVL…LFSF), 148 to 168 (ALFN…GIAL), 189 to 209 (IVHF…AETL), 224 to 244 (LVVL…ILVF), 305 to 325 (MAGA…TLGI), 337 to 357 (VVAS…LLLI), and 363 to 383 (LFGI…VIGV).

It belongs to the dicarboxylate/amino acid:cation symporter (DAACS) (TC 2.A.23) family.

The protein resides in the cell inner membrane. The enzyme catalyses L-serine(in) + Na(+)(in) = L-serine(out) + Na(+)(out). It catalyses the reaction L-threonine(in) + Na(+)(in) = L-threonine(out) + Na(+)(out). Functionally, involved in the import of serine and threonine into the cell, with the concomitant import of sodium (symport system). In Histophilus somni (strain 129Pt) (Haemophilus somnus), this protein is Serine/threonine transporter SstT.